Reading from the N-terminus, the 187-residue chain is UPF0167 protein MT2352 (187 aa).

The protein belongs to the UPF0167 family.

In Mycobacterium tuberculosis (strain CDC 1551 / Oshkosh), this protein is UPF0167 protein MT2352.